Reading from the N-terminus, the 188-residue chain is 3-deoxy-D-manno-octulosonate 8-phosphate phosphatase KdsC (188 aa).

Positions 32 and 34 each coordinate Mg(2+). Residues Asp34, 55–59 (NVRDG), Arg63, Arg78, Arg86, and Lys102 contribute to the substrate site. Asp125 contributes to the Mg(2+) binding site.

As to quaternary structure, homotetramer. Requires Mg(2+) as cofactor. The cofactor is Co(2+).

The catalysed reaction is 3-deoxy-alpha-D-manno-2-octulosonate-8-phosphate + H2O = 3-deoxy-alpha-D-manno-oct-2-ulosonate + phosphate. Its pathway is carbohydrate biosynthesis; 3-deoxy-D-manno-octulosonate biosynthesis; 3-deoxy-D-manno-octulosonate from D-ribulose 5-phosphate: step 3/3. It functions in the pathway bacterial outer membrane biogenesis; lipopolysaccharide biosynthesis. Inhibited by calcium, cadmium, mercury, and copper ions. Functionally, catalyzes the hydrolysis of 3-deoxy-D-manno-octulosonate 8-phosphate (KDO 8-P) to 3-deoxy-D-manno-octulosonate (KDO) and inorganic phosphate. The protein is 3-deoxy-D-manno-octulosonate 8-phosphate phosphatase KdsC of Escherichia coli (strain B / BL21-DE3).